The sequence spans 113 residues: TYRO protein tyrosine kinase-binding protein (113 aa).

The N-terminal stretch at 1–27 is a signal peptide; it reads MGGLEPCSRLLLLPLLLAVGGLRPVQA. The Extracellular segment spans residues 28–40; sequence QAQSDCSCSTVSP. The helical transmembrane segment at 41 to 61 threads the bilayer; that stretch reads GVLAGIVLGDLVLTVLIALAV. Asp-50 provides a ligand contact to Ca(2+). Over 62 to 113 the chain is Cytoplasmic; that stretch reads YFLGRLVPRGRGAAEAATRKQRITETESPYQELQGQRSDVYSDLNTQRPYYK. The tract at residues 75–113 is disordered; sequence AEAATRKQRITETESPYQELQGQRSDVYSDLNTQRPYYK. One can recognise an ITAM domain in the interval 80 to 108; the sequence is RKQRITETESPYQELQGQRSDVYSDLNTQ. The segment covering 87-113 has biased composition (polar residues); it reads TESPYQELQGQRSDVYSDLNTQRPYYK. Tyr-91 and Tyr-102 each carry phosphotyrosine.

It belongs to the TYROBP family. In terms of assembly, homodimer; disulfide-linked. Homotrimer; disulfide-linked. Homotetramer; disulfide-linked. Homotrimers and homotetramers form when low levels of partner receptors are available and is competitive with assembly with interacting receptors. They may represent alternative oligomerization states or may be intermediates in the receptor assembly process. Binding of a metal cation aids in homooligomerization through coordination of the metal ion by the subunits of the oligomer. Interacts with TREM1. Interacts with TREM2. Interacts with CLECSF5. Interacts with CD300LB and CD300C2. Interacts with CD300E. Interacts (via ITAM domain) with SYK (via SH2 domains); activates SYK mediating neutrophils and macrophages integrin-mediated activation. Interacts with KLRC2. Interacts with CD300H. Interacts with KLRD1. Following ligand binding by associated receptors, tyrosine phosphorylated in the ITAM domain which leads to activation of additional tyrosine kinases and subsequent cell activation.

It localises to the cell membrane. Adapter protein which non-covalently associates with activating receptors found on the surface of a variety of immune cells to mediate signaling and cell activation following ligand binding by the receptors. TYROBP is tyrosine-phosphorylated in the ITAM domain following ligand binding by the associated receptors which leads to activation of additional tyrosine kinases and subsequent cell activation. Also has an inhibitory role in some cells. Non-covalently associates with activating receptors of the CD300 family to mediate cell activation. Also mediates cell activation through association with activating receptors of the CD200R family. Required for neutrophil activation mediated by integrin. Required for the activation of myeloid cells mediated by the CLEC5A/MDL1 receptor. Associates with natural killer (NK) cell receptors such as the KLRD1/KLRC2 heterodimer to mediate NK cell activation. Associates with TREM1 to mediate activation of neutrophils and monocytes. Associates with TREM2 on monocyte-derived dendritic cells to mediate up-regulation of chemokine receptor CCR7 and dendritic cell maturation and survival. Association with TREM2 mediates cytokine-induced formation of multinucleated giant cells which are formed by the fusion of macrophages. Stabilizes the TREM2 C-terminal fragment (TREM2-CTF) produced by TREM2 ectodomain shedding which suppresses the release of pro-inflammatory cytokines. In microglia, required with TREM2 for phagocytosis of apoptotic neurons. Required with ITGAM/CD11B in microglia to control production of microglial superoxide ions which promote the neuronal apoptosis that occurs during brain development. Promotes pro-inflammatory responses in microglia following nerve injury which accelerates degeneration of injured neurons. Positively regulates the expression of the IRAK3/IRAK-M kinase and IL10 production by liver dendritic cells and inhibits their T cell allosimulatory ability. Negatively regulates B cell proliferation. Required for CSF1-mediated osteoclast cytoskeletal organization. Positively regulates multinucleation during osteoclast development. The chain is TYRO protein tyrosine kinase-binding protein from Macaca mulatta (Rhesus macaque).